We begin with the raw amino-acid sequence, 757 residues long: Vitamin K-dependent gamma-carboxylase (757 aa).

Alanine 2 carries the post-translational modification N-acetylalanine. The Cytoplasmic portion of the chain corresponds to 2–60 (AVHRGSALVAPASDKVQKNKSAQTSGLKQGSRMEKILGFEWTDLSSWQSVVTLLNKPTD). The helical transmembrane segment at 61–81 (PANLAVFRFLFAFLMLLDIPQ) threads the bilayer. Residues 82–113 (ERGLSSLDRKYLDGLDVCRFPLLDALRPLPLD) are Lumenal-facing. The cysteines at positions 99 and 450 are disulfide-linked. A helical transmembrane segment spans residues 114-134 (WMYLVYTIMFLGALGMMLGLC). Over 135-136 (YR) the chain is Cytoplasmic. Residues 137–157 (LSCVLFLLPYWYVFLLDKTSW) form a helical membrane-spanning segment. Topologically, residues 158-292 (NNHSYLYGLL…VSYFHCMNSQ (135 aa)) are lumenal. A helical membrane pass occupies residues 293-313 (LFSIGMFPYVMLASSPLFCSA). The Cytoplasmic portion of the chain corresponds to 314 to 361 (EWPRKLVARCPKRLQELLPTKAAPRPSASCVYKRSRGKAGPKPGLRHQ). Residues 362 to 382 (LGAIFTLLYLLEQLFLPYSHF) form a helical membrane-spanning segment. Topologically, residues 383 to 757 (LTQGYNNWTN…PDSEHVHSEF (375 aa)) are lumenal. The interval 729–757 (EPVDESSASNTDSSNHPSEPDSEHVHSEF) is disordered. The span at 734 to 745 (SSASNTDSSNHP) shows a compositional bias: polar residues. Residues 746 to 757 (SEPDSEHVHSEF) show a composition bias toward basic and acidic residues.

Belongs to the vitamin K-dependent gamma-carboxylase family. Monomer. May interact with CALU.

The protein resides in the endoplasmic reticulum membrane. The catalysed reaction is 4-carboxy-L-glutamyl-[protein] + 2,3-epoxyphylloquinone + H2O + H(+) = phylloquinol + L-glutamyl-[protein] + CO2 + O2. Mediates the vitamin K-dependent carboxylation of glutamate residues to calcium-binding gamma-carboxyglutamate (Gla) residues with the concomitant conversion of the reduced hydroquinone form of vitamin K to vitamin K epoxide. Catalyzes gamma-carboxylation of various proteins, such as blood coagulation factors (F2, F7, F9 and F10), osteocalcin (bglap and bglap2) or matrix Gla protein (MGP). This is Vitamin K-dependent gamma-carboxylase (Ggcx) from Mus musculus (Mouse).